We begin with the raw amino-acid sequence, 319 residues long: ADP-ribosyl cyclase/cyclic ADP-ribose hydrolase 2 (319 aa).

The N-terminal stretch at 1–33 is a signal peptide; the sequence is MAVQACALSLRLGLWMSLLLPVLPGAGARAAGA. 3 cysteine pairs are disulfide-bonded: cysteine 52/cysteine 68, cysteine 84/cysteine 164, and cysteine 145/cysteine 158. Asparagine 67 and asparagine 96 each carry an N-linked (GlcNAc...) asparagine glycan. NAD(+) is bound at residue tryptophan 110. Tryptophan 110 lines the nicotinamide pocket. An N-linked (GlcNAc...) asparagine glycan is attached at asparagine 149. Position 173 (tryptophan 173) interacts with NAD(+). An N-linked (GlcNAc...) asparagine glycan is attached at asparagine 193. Glutamate 211 is a binding site for NAD(+). Disulfide bonds link cysteine 239-cysteine 260 and cysteine 272-cysteine 281. The GPI-anchor amidated serine moiety is linked to residue serine 294. A propeptide spanning residues 295 to 319 is cleaved from the precursor; it reads PALHAIGDISLIISLLVALASSSQA.

It belongs to the ADP-ribosyl cyclase family. As to quaternary structure, homodimer. In terms of tissue distribution, pancreatic islets, kidney, spleen, heart, thymus, intestine and salivary gland.

It localises to the cell membrane. It carries out the reaction NAD(+) + H2O = ADP-D-ribose + nicotinamide + H(+). It catalyses the reaction NAD(+) = cyclic ADP-beta-D-ribose + nicotinamide + H(+). The enzyme catalyses cyclic ADP-beta-D-ribose + H2O = ADP-D-ribose. Functionally, catalyzes both the synthesis of cyclic ADP-beta-D-ribose (cADPR) from NAD(+), and its hydrolysis to ADP-D-ribose (ADPR). Cyclic ADPR is known to serve as an endogenous second messenger that elicits calcium release from intracellular stores, and thus regulates the mobilization of intracellular calcium. May be involved in pre-B-cell growth. The polypeptide is ADP-ribosyl cyclase/cyclic ADP-ribose hydrolase 2 (Bst1) (Rattus norvegicus (Rat)).